The primary structure comprises 1205 residues: Nitric oxide synthase 3 (1205 aa).

Positions 1–73 (MGNLKSVGQE…PPEGPKFPRV (73 aa)) are disordered. Gly2 carries N-myristoyl glycine lipidation. S-palmitoyl cysteine attachment occurs at residues Cys15 and Cys26. The span at 15 to 27 (CGLGLGLGLGLCG) shows a compositional bias: gly residues. Pro residues predominate over residues 33–47 (TPAPEPSRAPAPATP). Positions 96 and 101 each coordinate Zn(2+). Positions 100–488 (RCLGSLVLPR…PDPWKGSAAK (389 aa)) are interaction with NOSIP. A (6R)-L-erythro-5,6,7,8-tetrahydrobiopterin-binding site is contributed by Ser104. Residue Ser116 is modified to Phosphoserine; by CDK5. Cys186 is a heme b binding site. Residues Gln249, Trp358, Tyr359, Glu363, and Asn368 each contribute to the L-arginine site. (6R)-L-erythro-5,6,7,8-tetrahydrobiopterin is bound by residues Ala448, Trp449, and Phe462. Tyr477 contributes to the heme b binding site. A calmodulin-binding region spans residues 492 to 512 (IARKKTFKEVANAVKISASLM). Thr497 carries the post-translational modification Phosphothreonine; by AMPK. One can recognise a Flavodoxin-like domain in the interval 522–705 (ASILYASETV…AFRGWAQAAF (184 aa)). Residues Ser528, Glu529, Thr530, Arg532, Ser574, and Thr575 each coordinate FMN. 3 positions are modified to phosphoserine: Ser617, Ser635, and Ser640. FMN is bound by residues Ser656, Cys663, Glu689, and Gln693. In terms of domain architecture, FAD-binding FR-type spans 758 to 1004 (RKMFQATVLS…IRAAPSFRLP (247 aa)). Residue Arg778 coordinates NADP(+). His800 provides a ligand contact to FAD. A disordered region spans residues 820–848 (EDPTPPTESVGVEQLEKGSPGGPPPSWVR). Phosphoserine is present on Ser838. Residues Arg940, Tyr942, Ser943, Thr958, Ala960, Tyr964, Val977, Cys978, and Ser979 each coordinate FAD. Positions 1018, 1051, 1080, 1081, 1087, 1089, and 1091 each coordinate NADP(+). Thr1177 bears the Phosphothreonine mark. Residue Ser1179 is modified to Phosphoserine; by AMPK. Ser1181 is subject to Phosphoserine.

The protein belongs to the NOS family. In terms of assembly, homodimer. Interacts with NOSIP and NOSTRIN. Interacts with HSP90AB1. Forms a complex with ASL, ASS1 and SLC7A1; the complex regulates cell-autonomous L-arginine synthesis and citrulline recycling while channeling extracellular L-arginine to nitric oxide synthesis pathway. It depends on heme b as a cofactor. The cofactor is FAD. FMN is required as a cofactor. Requires (6R)-L-erythro-5,6,7,8-tetrahydrobiopterin as cofactor. In terms of processing, phosphorylation by AMPK at Ser-1179 in the presence of Ca(2+)-calmodulin (CaM) activates activity. In absence of Ca(2+)-calmodulin, AMPK also phosphorylates Thr-497, resulting in inhibition of activity. Phosphorylation of Ser-116 by CDK5 reduces activity.

Its subcellular location is the membrane. The protein localises to the caveola. It localises to the cytoplasm. It is found in the cytoskeleton. The protein resides in the golgi apparatus. Its subcellular location is the cell membrane. The enzyme catalyses 2 L-arginine + 3 NADPH + 4 O2 + H(+) = 2 L-citrulline + 2 nitric oxide + 3 NADP(+) + 4 H2O. Its activity is regulated as follows. Stimulated by calcium/calmodulin. Inhibited by NOSIP and NOSTRIN. Its function is as follows. Produces nitric oxide (NO) which is implicated in vascular smooth muscle relaxation through a cGMP-mediated signal transduction pathway. NO mediates vascular endothelial growth factor (VEGF)-induced angiogenesis in coronary vessels and promotes blood clotting through the activation of platelets. The chain is Nitric oxide synthase 3 (NOS3) from Sus scrofa (Pig).